The chain runs to 647 residues: TNFAIP3-interacting protein 1 (647 aa).

Residues 39–72 (MQGIKMLGELLEESQMEASRLRQKAEELVKDSEL) adopt a coiled-coil conformation. The span at 61-71 (QKAEELVKDSE) shows a compositional bias: basic and acidic residues. A disordered region spans residues 61–168 (QKAEELVKDS…DLGPPPPEDS (108 aa)). Residue serine 77 is modified to Phosphoserine. Positions 95–425 (TKVQVHPATS…SPLTRQREYQ (331 aa)) are interaction with Nef. A compositionally biased stretch (low complexity) spans 102-115 (ATSTAATTTATATT). A compositionally biased stretch (polar residues) spans 143–155 (EEQNSPETGSHPT). A coiled-coil region spans residues 209-270 (SKVHKNEQRT…KKLLMNSSCK (62 aa)). Serine 297, serine 416, and serine 455 each carry phosphoserine. Residues 311 to 551 (AAEKKVKLLE…KASGERYHME (241 aa)) are a coiled coil. Residues 444–601 (ASPSSPPAAF…MEHPPPHPNS (158 aa)) are required for inhibitory activity of TNF-induced NF-kappa-B activation. Residues 465 to 523 (KQELVTQNELLKQQVKIFEEDFQRERSDRERMNEEKEELKKQVEKLQAQVTLTNAQLKT) form a ubiquitin-binding domain (UBD) region. The Nuclear localization signal signature appears at 537–543 (QKRKAKA). Phosphotyrosine is present on tyrosine 565. Arginine 584 carries the asymmetric dimethylarginine modification. An Asymmetric dimethylarginine; alternate modification is found at arginine 612. Position 612 is an omega-N-methylarginine; alternate (arginine 612). Residues 613-647 (PPCAGIRNQSSQVMDPPPDRPAEPESADNDCDGPQ) are disordered. A compositionally biased stretch (acidic residues) spans 637–647 (ESADNDCDGPQ). Phosphoserine is present on serine 638.

In terms of assembly, interacts with TNFAIP3 and IKBKG (polyubiquitinated); facilitates TNFAIP3-mediated de-ubiquitination of NEMO/IKBKG. Interacts with polyubiquitin. Interacts with MAPK1, SELPLG and PIK3CD. Interacts with IRAK1 (polyubiquitinated). Interacts with MYD88; the interaction is indicative for participation in an activated TLR-signaling complex. Interacts with TAX1BP1. In terms of processing, phosphorylation at Tyr-565 by SRC-family kinases recruits phosphoinositide-3-kinase (PI3K) PIK3CD:p85 heterodimer which results in integrin activation and leukocyte adhesion to activated endothelium during inflammation. In terms of tissue distribution, ubiquitous. Abundant in heart and skeletal muscle and expressed at lower levels in thymus, liver, kidney, brain and intestinal tract.

It is found in the cytoplasm. Its subcellular location is the nucleus. In terms of biological role, inhibits NF-kappa-B activation and TNF-induced NF-kappa-B-dependent gene expression by regulating TAX1BP1 and A20/TNFAIP3-mediated deubiquitination of IKBKG; proposed to link A20/TNFAIP3 to ubiquitinated IKBKG. Involved in regulation of EGF-induced ERK1/ERK2 signaling pathway; blocks MAPK3/MAPK1 nuclear translocation and MAPK1-dependent transcription. Increases cell surface CD4(T4) antigen expression. Involved in the anti-inflammatory response of macrophages and positively regulates TLR-induced activation of CEBPB. Involved in the prevention of autoimmunity; this function implicates binding to polyubiquitin. Involved in leukocyte integrin activation during inflammation; this function is mediated by association with SELPLG and dependent on phosphorylation by SRC-family kinases. In Mus musculus (Mouse), this protein is TNFAIP3-interacting protein 1 (Tnip1).